The primary structure comprises 282 residues: Glycine betaine/carnitine transport permease protein GbuB (282 aa).

The next 6 membrane-spanning stretches (helical) occupy residues 44 to 64 (VFDL…TFWV), 70 to 90 (KWGL…LDFW), 99 to 119 (LVLT…IWMA), 140 to 160 (AFVY…PGVV), 220 to 240 (IMLA…GLGT), and 251 to 271 (AGGG…LDRL). An ABC transmembrane type-1 domain is found at 93-272 (MTQTLTLVLT…IVAIILDRLT (180 aa)).

It belongs to the binding-protein-dependent transport system permease family. In terms of assembly, the complex is composed of two ATP-binding proteins (GbuA), two transmembrane proteins (GbuB) and a solute-binding protein (GbuC).

The protein resides in the cell membrane. Its activity is regulated as follows. The complex is activated by an osmotic gradient or by low temperature. In terms of biological role, part of the ABC transporter complex GbuABC involved in glycine betaine uptake. Responsible for the translocation of the substrate across the membrane. Involved, with BetL and OpuC, in osmoprotection and cryoprotection of Listeria. Can also uptake carnitine when carnitine is abundant in the growth medium. This Listeria monocytogenes serotype 1/2a (strain 10403S) protein is Glycine betaine/carnitine transport permease protein GbuB (gbuB).